The chain runs to 222 residues: Phosphoenolpyruvate guanylyltransferase (222 aa).

Residues T134, G150, and S153 each coordinate phosphoenolpyruvate.

This sequence belongs to the CofC family.

It carries out the reaction phosphoenolpyruvate + GTP + H(+) = enolpyruvoyl-2-diphospho-5'-guanosine + diphosphate. It functions in the pathway cofactor biosynthesis; coenzyme F420 biosynthesis. Guanylyltransferase that catalyzes the activation of phosphoenolpyruvate (PEP) as enolpyruvoyl-2-diphospho-5'-guanosine, via the condensation of PEP with GTP. It is involved in the biosynthesis of coenzyme F420, a hydride carrier cofactor. The protein is Phosphoenolpyruvate guanylyltransferase of Roseiflexus sp. (strain RS-1).